The primary structure comprises 500 residues: ATP synthase subunit alpha (500 aa).

Residue 167–174 (GDRQTGKT) coordinates ATP.

The protein belongs to the ATPase alpha/beta chains family. F-type ATPases have 2 components, CF(1) - the catalytic core - and CF(0) - the membrane proton channel. CF(1) has five subunits: alpha(3), beta(3), gamma(1), delta(1), epsilon(1). CF(0) has three main subunits: a(1), b(2) and c(9-12). The alpha and beta chains form an alternating ring which encloses part of the gamma chain. CF(1) is attached to CF(0) by a central stalk formed by the gamma and epsilon chains, while a peripheral stalk is formed by the delta and b chains.

The protein localises to the cell inner membrane. It catalyses the reaction ATP + H2O + 4 H(+)(in) = ADP + phosphate + 5 H(+)(out). Its function is as follows. Produces ATP from ADP in the presence of a proton gradient across the membrane. The alpha chain is a regulatory subunit. The protein is ATP synthase subunit alpha of Wolinella succinogenes (strain ATCC 29543 / DSM 1740 / CCUG 13145 / JCM 31913 / LMG 7466 / NCTC 11488 / FDC 602W) (Vibrio succinogenes).